Consider the following 197-residue polypeptide: MSSKEQKTPEGQAPEEIIMDQHEEIEAVEPEASAEQVDPRDEKIANLEAQLAEAQTRERDGILRVKAEMENLRRRTELDIEKAHKFALEKFINELLPVIDSLDRALEVADKANPDMSAMVEGIELTLKSMLDVVRKFGVEVIAETNVPLDPNVHQAIAMVESDDVAPGNVLGIMQKGYTLNGRTIRAAMVTVAKVKA.

The tract at residues 1-39 (MSSKEQKTPEGQAPEEIIMDQHEEIEAVEPEASAEQVDP) is disordered.

It belongs to the GrpE family. In terms of assembly, homodimer.

Its subcellular location is the cytoplasm. Its function is as follows. Participates actively in the response to hyperosmotic and heat shock by preventing the aggregation of stress-denatured proteins, in association with DnaK and GrpE. It is the nucleotide exchange factor for DnaK and may function as a thermosensor. Unfolded proteins bind initially to DnaJ; upon interaction with the DnaJ-bound protein, DnaK hydrolyzes its bound ATP, resulting in the formation of a stable complex. GrpE releases ADP from DnaK; ATP binding to DnaK triggers the release of the substrate protein, thus completing the reaction cycle. Several rounds of ATP-dependent interactions between DnaJ, DnaK and GrpE are required for fully efficient folding. The sequence is that of Protein GrpE from Escherichia coli O157:H7 (strain EC4115 / EHEC).